Here is a 240-residue protein sequence, read N- to C-terminus: Probable transcriptional regulatory protein A2cp1_1765 (240 aa).

The protein belongs to the TACO1 family.

It localises to the cytoplasm. The protein is Probable transcriptional regulatory protein A2cp1_1765 of Anaeromyxobacter dehalogenans (strain 2CP-1 / ATCC BAA-258).